Reading from the N-terminus, the 602-residue chain is Chaperone protein dnaK (602 aa).

Belongs to the heat shock protein 70 family.

The protein resides in the plastid. The protein localises to the chloroplast. Its function is as follows. Acts as a chaperone. The sequence is that of Chaperone protein dnaK from Thalassiosira pseudonana (Marine diatom).